The following is a 356-amino-acid chain: Biotin synthase (356 aa).

In terms of domain architecture, Radical SAM core spans 54–278 (GEVQLCTLLS…VAVARITMPL (225 aa)). Residues C69, C73, and C76 each coordinate [4Fe-4S] cluster. 4 residues coordinate [2Fe-2S] cluster: C113, C144, C204, and R282.

Belongs to the radical SAM superfamily. Biotin synthase family. Homodimer. The cofactor is [4Fe-4S] cluster. [2Fe-2S] cluster serves as cofactor.

The enzyme catalyses (4R,5S)-dethiobiotin + (sulfur carrier)-SH + 2 reduced [2Fe-2S]-[ferredoxin] + 2 S-adenosyl-L-methionine = (sulfur carrier)-H + biotin + 2 5'-deoxyadenosine + 2 L-methionine + 2 oxidized [2Fe-2S]-[ferredoxin]. It functions in the pathway cofactor biosynthesis; biotin biosynthesis; biotin from 7,8-diaminononanoate: step 2/2. Functionally, catalyzes the conversion of dethiobiotin (DTB) to biotin by the insertion of a sulfur atom into dethiobiotin via a radical-based mechanism. This chain is Biotin synthase, found in Novosphingobium aromaticivorans (strain ATCC 700278 / DSM 12444 / CCUG 56034 / CIP 105152 / NBRC 16084 / F199).